An 87-amino-acid polypeptide reads, in one-letter code: RNA-binding protein Hfq (87 aa).

The 60-residue stretch at 9-68 (DPFLNALRRERIPVSIYLVNGIKLQGQIESFDQFVILLKNTVNQMVYKHAISTVVPARPV) folds into the Sm domain. The disordered stretch occupies residues 65–87 (ARPVSHHSGDRPASDRPAEKSEE). A compositionally biased stretch (basic and acidic residues) spans 71–87 (HSGDRPASDRPAEKSEE).

Belongs to the Hfq family.

In terms of biological role, RNA chaperone that binds small regulatory RNA (sRNAs) and mRNAs to facilitate mRNA translational regulation in response to envelope stress, environmental stress and changes in metabolite concentrations. Also binds with high specificity to tRNAs. Essential for virulence in the suckling mouse model of cholera pathogenesis. This chain is RNA-binding protein Hfq, found in Vibrio cholerae serotype O1 (strain ATCC 39315 / El Tor Inaba N16961).